Reading from the N-terminus, the 447-residue chain is MREILHIQGGQCGNQIGAKFWEVVCDEHGIDPTGRYTGTSDLQLERVNVYYNEASCGRFVPRAVLMDLEPGTMDSVRTGPYGQIFRPDNFVFGQSGAGNNWAKGHYTEGAELIDSVLDVVRKEAENCDCLQGFQVCHSLGGGTGSGMGTLLISKIREEYPDRMMLTFSVFPSPKVSDTVVEPYNATLSVHQLVENADECMVLDNEALYDICFRTLKLTTPSFGDLNHLISATMSGVTCCLRFPGQLNSDLRKLAVNLIPFPRLHFFMVGFAPLTSRGSQQYRALTVPELTQQMWDAKNMMCAADPRHGRYLTASAMFRGKMSTKEVDEQMINVQNKNSSYFVEWIPNNVKSSVCDIPPTGLSMASTFVGNSTSIQEMFRRVSEQFTSMFRRKAFLHWYTGEGMDEMEFTEAESNMNDLVSEYQQYQDATSDEEGEYEDEDQEPEEDM.

The GTP site is built by Q11, E69, S138, G142, T143, G144, N204, and N226. E69 contributes to the Mg(2+) binding site. Over residues 419–428 (VSEYQQYQDA) the composition is skewed to polar residues. Positions 419 to 447 (VSEYQQYQDATSDEEGEYEDEDQEPEEDM) are disordered. A compositionally biased stretch (acidic residues) spans 429–447 (TSDEEGEYEDEDQEPEEDM).

It belongs to the tubulin family. As to quaternary structure, dimer of alpha and beta chains. A typical microtubule is a hollow water-filled tube with an outer diameter of 25 nm and an inner diameter of 15 nM. Alpha-beta heterodimers associate head-to-tail to form protofilaments running lengthwise along the microtubule wall with the beta-tubulin subunit facing the microtubule plus end conferring a structural polarity. Microtubules usually have 13 protofilaments but different protofilament numbers can be found in some organisms and specialized cells. Requires Mg(2+) as cofactor.

Its subcellular location is the cytoplasm. The protein resides in the cytoskeleton. Functionally, tubulin is the major constituent of microtubules, a cylinder consisting of laterally associated linear protofilaments composed of alpha- and beta-tubulin heterodimers. Microtubules grow by the addition of GTP-tubulin dimers to the microtubule end, where a stabilizing cap forms. Below the cap, tubulin dimers are in GDP-bound state, owing to GTPase activity of alpha-tubulin. The polypeptide is Tubulin beta-2 chain (TUBB2) (Triticum aestivum (Wheat)).